The sequence spans 810 residues: Zinc finger transcription factor YRR1 (810 aa).

The interval 1–47 (MKRRSDALLGSFQATNVTPPSDNSNSTAGGANGSNSGTPTSTSGKKR) is disordered. Polar residues predominate over residues 12 to 22 (FQATNVTPPSD). The span at 23-43 (NSNSTAGGANGSNSGTPTSTS) shows a compositional bias: low complexity. The zn(2)-C6 fungal-type DNA-binding region spans 54–82 (CGFCRRRKLRCDQQKPMCSTCISRNLTTC). The interval 722–742 (ELDPQSDNPSSEAKIVSDRQR) is disordered.

Its subcellular location is the cytoplasm. It localises to the nucleus. Its function is as follows. Transcription factor involved in the regulation of multidrug resistance genes. Acts in concert with YRR1. The chain is Zinc finger transcription factor YRR1 (YRR1) from Saccharomyces cerevisiae (strain ATCC 204508 / S288c) (Baker's yeast).